A 528-amino-acid chain; its full sequence is Importin subunit alpha-2 (528 aa).

Low complexity predominate over residues 1-15 (MADDSASPSPSSASP). The tract at residues 1–36 (MADDSASPSPSSASPLQHHREALKSSVRNTAASRRR) is disordered. ARM repeat units lie at residues 125-165 (VPLV…NIAA), 167-206 (EPEE…NVAG), 209-248 (AELR…NLIK), 253-292 (KAAN…YLSA), 294-335 (SDRG…NLIA), 338-383 (DYMV…NIAA), 386-425 (FEHK…NLCV), and 438-477 (VEHL…LVMR).

The protein belongs to the importin alpha family. Forms a complex with importin subunit beta-1. The whole complex, most stable and composed of importin alpha, importin beta and NLS substrate, is referred to as PTAC or pore targeting complex. As to expression, expressed in root, callus, and etiolated leaf. Low expression in green leaf.

Its subcellular location is the cytoplasm. The protein resides in the perinuclear region. Binds specifically and directly to substrates containing either a simple or bipartite NLS motif. Promotes docking of import substrates to the nuclear envelope. The sequence is that of Importin subunit alpha-2 from Oryza sativa subsp. japonica (Rice).